Reading from the N-terminus, the 168-residue chain is Small ribosomal subunit protein uS5 (168 aa).

One can recognise an S5 DRBM domain in the interval 14 to 77; the sequence is FEERVVSINR…EAAKKNLITV (64 aa).

The protein belongs to the universal ribosomal protein uS5 family. In terms of assembly, part of the 30S ribosomal subunit. Contacts proteins S4 and S8.

With S4 and S12 plays an important role in translational accuracy. Functionally, located at the back of the 30S subunit body where it stabilizes the conformation of the head with respect to the body. The polypeptide is Small ribosomal subunit protein uS5 (Lactococcus lactis subsp. lactis (strain IL1403) (Streptococcus lactis)).